We begin with the raw amino-acid sequence, 79 residues long: Small ribosomal subunit protein bS18 (79 aa).

It belongs to the bacterial ribosomal protein bS18 family. Part of the 30S ribosomal subunit. Forms a tight heterodimer with protein bS6.

In terms of biological role, binds as a heterodimer with protein bS6 to the central domain of the 16S rRNA, where it helps stabilize the platform of the 30S subunit. The polypeptide is Small ribosomal subunit protein bS18 (Ureaplasma urealyticum serovar 10 (strain ATCC 33699 / Western)).